The following is a 195-amino-acid chain: Myelin-associated neurite-outgrowth inhibitor (195 aa).

Residue methionine 1 is modified to N-acetylmethionine. Residues 1–18 are Cytoplasmic-facing; it reads MNPVYSPGSSGVPYANAK. Position 6 is a phosphoserine (serine 6). The chain crosses the membrane as a helical span at residues 19–42; the sequence is GIGYPAGFPMGYAAAAPAYSPNMY. Residues 43–142 are Extracellular-facing; sequence PGANPTFQAG…PAPLPPPRGN (100 aa). An N-linked (GlcNAc...) asparagine glycan is attached at asparagine 46. Residues 143–164 traverse the membrane as a helical segment; sequence GVTMGMVAGTTMAMSAGTLLTA. Topologically, residues 165 to 195 are cytoplasmic; that stretch reads HSPTPVAPHPVTVPTYRAPGTPTYSYVPPQW.

It belongs to the FAM168 family. As to quaternary structure, may form homodimers. May interact with DAZAP2, FAM168A, PRDX6, RBM6, TMTC1 and YPEL2. Interacts with CDC27. N-glycosylated.

The protein resides in the cytoplasm. It is found in the perinuclear region. It localises to the cell membrane. The protein localises to the cell projection. Its subcellular location is the axon. In terms of biological role, inhibitor of neuronal axonal outgrowth. Acts as a negative regulator of CDC42 and STAT3 and a positive regulator of STMN2. Positive regulator of CDC27. This Bos taurus (Bovine) protein is Myelin-associated neurite-outgrowth inhibitor (FAM168B).